A 178-amino-acid chain; its full sequence is ATP synthase subunit delta (178 aa).

This sequence belongs to the ATPase delta chain family. F-type ATPases have 2 components, F(1) - the catalytic core - and F(0) - the membrane proton channel. F(1) has five subunits: alpha(3), beta(3), gamma(1), delta(1), epsilon(1). F(0) has three main subunits: a(1), b(2) and c(10-14). The alpha and beta chains form an alternating ring which encloses part of the gamma chain. F(1) is attached to F(0) by a central stalk formed by the gamma and epsilon chains, while a peripheral stalk is formed by the delta and b chains.

The protein localises to the cell inner membrane. Functionally, f(1)F(0) ATP synthase produces ATP from ADP in the presence of a proton or sodium gradient. F-type ATPases consist of two structural domains, F(1) containing the extramembraneous catalytic core and F(0) containing the membrane proton channel, linked together by a central stalk and a peripheral stalk. During catalysis, ATP synthesis in the catalytic domain of F(1) is coupled via a rotary mechanism of the central stalk subunits to proton translocation. This protein is part of the stalk that links CF(0) to CF(1). It either transmits conformational changes from CF(0) to CF(1) or is implicated in proton conduction. This is ATP synthase subunit delta from Hydrogenovibrio crunogenus (strain DSM 25203 / XCL-2) (Thiomicrospira crunogena).